Reading from the N-terminus, the 1091-residue chain is Methionine S-methyltransferase (1091 aa).

The protein belongs to the class I-like SAM-binding methyltransferase superfamily. Homotetramer.

It localises to the cytoplasm. The catalysed reaction is L-methionine + S-adenosyl-L-methionine = S-methyl-L-methionine + S-adenosyl-L-homocysteine. Catalyzes the S-methylmethionine (SMM) biosynthesis from adenosyl-L-homocysteine (AdoMet) and methionine. SMM biosynthesis (by MMT1) and degradation (by HMT-1, HMT-2 and HMT-3) constitute the SMM cycle in plants, which is probably required to achieve short term control of AdoMet level. Also able to catalyze the selenium-methylmethionine (SeMM) from AdoMet and selenium-methionine (SeMet). May play a role in phoem sulfur transport; such function is however not essential. The sequence is that of Methionine S-methyltransferase (MMT1) from Zea mays (Maize).